The primary structure comprises 942 residues: DNA mismatch repair protein MutS (942 aa).

Position 613 to 620 (613 to 620) interacts with ATP; it reads GPNMAGKS.

Belongs to the DNA mismatch repair MutS family.

Its function is as follows. This protein is involved in the repair of mismatches in DNA. It is possible that it carries out the mismatch recognition step. This protein has a weak ATPase activity. The sequence is that of DNA mismatch repair protein MutS from Clostridium botulinum (strain Eklund 17B / Type B).